Consider the following 200-residue polypeptide: ATP-dependent Clp protease proteolytic subunit (200 aa).

S102 (nucleophile) is an active-site residue. The active site involves H127.

This sequence belongs to the peptidase S14 family. As to quaternary structure, fourteen ClpP subunits assemble into 2 heptameric rings which stack back to back to give a disk-like structure with a central cavity, resembling the structure of eukaryotic proteasomes.

It localises to the cytoplasm. The catalysed reaction is Hydrolysis of proteins to small peptides in the presence of ATP and magnesium. alpha-casein is the usual test substrate. In the absence of ATP, only oligopeptides shorter than five residues are hydrolyzed (such as succinyl-Leu-Tyr-|-NHMec, and Leu-Tyr-Leu-|-Tyr-Trp, in which cleavage of the -Tyr-|-Leu- and -Tyr-|-Trp bonds also occurs).. Its function is as follows. Cleaves peptides in various proteins in a process that requires ATP hydrolysis. Has a chymotrypsin-like activity. Plays a major role in the degradation of misfolded proteins. This chain is ATP-dependent Clp protease proteolytic subunit, found in Dehalococcoides mccartyi (strain ATCC BAA-2266 / KCTC 15142 / 195) (Dehalococcoides ethenogenes (strain 195)).